The following is a 93-amino-acid chain: Late embryogenesis abundant protein B19.1A (93 aa).

The disordered stretch occupies residues Met1–Ser93. Composition is skewed to basic and acidic residues over residues Ser9–Glu19 and Gly73–Ser93.

It belongs to the small hydrophilic plant seed protein family. As to expression, embryos and young seedlings.

Functionally, lea proteins are late embryonic proteins abundant in higher plant seed embryos. It may have a role in desiccation tolerance by acting as an osmoprotective protein or as a desiccation-damage repair protein. The sequence is that of Late embryogenesis abundant protein B19.1A (B19.1A) from Hordeum vulgare (Barley).